Consider the following 83-residue polypeptide: Small ribosomal subunit protein bS20 (83 aa).

This sequence belongs to the bacterial ribosomal protein bS20 family.

Functionally, binds directly to 16S ribosomal RNA. This Staphylococcus haemolyticus (strain JCSC1435) protein is Small ribosomal subunit protein bS20.